Here is a 374-residue protein sequence, read N- to C-terminus: UDP-N-acetylglucosamine--N-acetylmuramyl-(pentapeptide) pyrophosphoryl-undecaprenol N-acetylglucosamine transferase (374 aa).

Residues 13–15, Asn124, Arg165, Ser193, and Gln294 each bind UDP-N-acetyl-alpha-D-glucosamine; that span reads TGG.

Belongs to the glycosyltransferase 28 family. MurG subfamily.

It localises to the cell inner membrane. It catalyses the reaction di-trans,octa-cis-undecaprenyl diphospho-N-acetyl-alpha-D-muramoyl-L-alanyl-D-glutamyl-meso-2,6-diaminopimeloyl-D-alanyl-D-alanine + UDP-N-acetyl-alpha-D-glucosamine = di-trans,octa-cis-undecaprenyl diphospho-[N-acetyl-alpha-D-glucosaminyl-(1-&gt;4)]-N-acetyl-alpha-D-muramoyl-L-alanyl-D-glutamyl-meso-2,6-diaminopimeloyl-D-alanyl-D-alanine + UDP + H(+). The protein operates within cell wall biogenesis; peptidoglycan biosynthesis. Functionally, cell wall formation. Catalyzes the transfer of a GlcNAc subunit on undecaprenyl-pyrophosphoryl-MurNAc-pentapeptide (lipid intermediate I) to form undecaprenyl-pyrophosphoryl-MurNAc-(pentapeptide)GlcNAc (lipid intermediate II). This chain is UDP-N-acetylglucosamine--N-acetylmuramyl-(pentapeptide) pyrophosphoryl-undecaprenol N-acetylglucosamine transferase, found in Rhizobium etli (strain CIAT 652).